The chain runs to 551 residues: L-lactate permease (551 aa).

12 consecutive transmembrane segments (helical) span residues 13–33, 37–57, 69–89, 131–151, 159–179, 194–214, 245–265, 306–326, 366–386, 405–425, 438–458, and 530–550; these read NIWLSSLIASLPILFFFFALI, LKGYVAASWTVVIALAVALLF, VVYGFFYGLWPIAWIIIAAVF, GAAGFGAPVAITAALLVGLGF, LCLIVNTAPVAFGAMGIPILV, MVGRQLPFLTIIVLFWIMAIM, IGPELPDIISSLVSLVCLTLF, FLFLTATVTLWSIPPFKALFA, FDWFSATGTAILFAALLSIVW, LALPIYSIGMVLAFAFISNYS, TGSAFTFFSPFLGWLGVFLTG, and IFTCMVGVITTLQAYVLTWMI.

This sequence belongs to the lactate permease family.

Its subcellular location is the cell inner membrane. The catalysed reaction is (S)-lactate(in) + H(+)(in) = (S)-lactate(out) + H(+)(out). It catalyses the reaction (R)-lactate(in) + H(+)(in) = (R)-lactate(out) + H(+)(out). It carries out the reaction glycolate(in) + H(+)(in) = glycolate(out) + H(+)(out). Its function is as follows. Uptake of L-lactate across the membrane. Can also transport D-lactate and glycolate. Seems to be driven by a proton motive force. The protein is L-lactate permease (lldP) of Salmonella typhi.